The sequence spans 223 residues: F420-dependent NADP reductase (223 aa).

NADP(+) is bound by residues 9 to 12, 30 to 31, Lys-35, Leu-75, and Val-101; these read TGDQ and SR.

Belongs to the F420-dependent NADP reductase family.

It carries out the reaction reduced coenzyme F420-(gamma-L-Glu)(n) + NADP(+) = oxidized coenzyme F420-(gamma-L-Glu)(n) + NADPH + 2 H(+). Functionally, catalyzes the reduction of NADP(+) with F420H(2) via hydride transfer, and the reverse reaction, i.e. the reduction of F420 with NADPH. Probably functions in the regeneration of NADPH required in biosynthetic reactions. The protein is F420-dependent NADP reductase (fno) of Methanocaldococcus jannaschii (strain ATCC 43067 / DSM 2661 / JAL-1 / JCM 10045 / NBRC 100440) (Methanococcus jannaschii).